Reading from the N-terminus, the 304-residue chain is Glycine--tRNA ligase alpha subunit (304 aa).

This sequence belongs to the class-II aminoacyl-tRNA synthetase family. Tetramer of two alpha and two beta subunits.

Its subcellular location is the cytoplasm. It catalyses the reaction tRNA(Gly) + glycine + ATP = glycyl-tRNA(Gly) + AMP + diphosphate. This Streptococcus agalactiae serotype III (strain NEM316) protein is Glycine--tRNA ligase alpha subunit.